Reading from the N-terminus, the 246-residue chain is Acetoacetate decarboxylase (246 aa).

Lys-116 (schiff-base intermediate with acetoacetate) is an active-site residue.

It belongs to the ADC family.

It carries out the reaction acetoacetate + H(+) = acetone + CO2. Catalyzes the conversion of acetoacetate to acetone and carbon dioxide. The protein is Acetoacetate decarboxylase of Burkholderia lata (strain ATCC 17760 / DSM 23089 / LMG 22485 / NCIMB 9086 / R18194 / 383).